The sequence spans 425 residues: MSGSTESKKQPRRRFIGRKSGNSNNDKLTTVAENGNEIIHKQKSRIALGRSVNHVPEDILNDKELNEAIKLLPSNYNFEIHKTVWNIRKYNAKRIALQMPEGLLIYSLIISDILEQFCGVETLVMGDVSYGACCIDDFTARALDCDFIVHYAHSCLVPIDVTKIKVLYVFVTINIQEDHIIKTLQKNFPKGSRIATFGTIQFNPAVHSVRDKLLNDEEHMLYIIPPQIKPLSRGEVLGCTSERLDKEQYDAMVFIGDGRFHLESAMIHNPEIPAFKYDPYNRKFTREGYDQKQLVEVRAEAIEVARKGKVFGLILGALGRQGNLNTVKNLEKNLIAAGKTVVKIILSEVFPQKLAMFDQIDVFVQVACPRLSIDWGYAFNKPLLTPYEASVLLKKDVMFSEKYYPMDYYEAKGYGRGETPKHAIE.

Residues 1–29 (MSGSTESKKQPRRRFIGRKSGNSNNDKLT) are disordered. The tract at residues 1-60 (MSGSTESKKQPRRRFIGRKSGNSNNDKLTTVAENGNEIIHKQKSRIALGRSVNHVPEDIL) is required for function but dispensable for interaction with DPH2 and DPH3. The segment covering 20–29 (SGNSNNDKLT) has biased composition (polar residues). Ser44 is subject to Phosphoserine. [4Fe-4S] cluster contacts are provided by Cys133, Cys239, and Cys368. The tract at residues 366-425 (VACPRLSIDWGYAFNKPLLTPYEASVLLKKDVMFSEKYYPMDYYEAKGYGRGETPKHAIE) is required for function but dispensable for interaction with DPH2 and DPH3.

It belongs to the DPH1/DPH2 family. DPH1 subfamily. Component of the 2-(3-amino-3-carboxypropyl)histidine synthase complex composed of DPH1, DPH2, KTI11/DPH3 and a NADH-dependent reductase, predominantly CBR1. Interacts with DPH2; the interaction is direct. Interacts with KTI11/DPH3. The cofactor is [4Fe-4S] cluster.

It localises to the cytoplasm. The enzyme catalyses L-histidyl-[translation elongation factor 2] + S-adenosyl-L-methionine = 2-[(3S)-amino-3-carboxypropyl]-L-histidyl-[translation elongation factor 2] + S-methyl-5'-thioadenosine + H(+). The protein operates within protein modification; peptidyl-diphthamide biosynthesis. Catalyzes the first step of diphthamide biosynthesis, a post-translational modification of histidine which occurs in elongation factor 2. In association with DPH2, transfers a 3-amino-3-carboxypropyl (ACP) group from S-adenosyl-L-methionine (SAM) to a histidine residue, the reaction is assisted by a reduction system comprising KTI11/DPH3 and a NADH-dependent reductase, predominantly CBR1. This Saccharomyces cerevisiae (strain ATCC 204508 / S288c) (Baker's yeast) protein is 2-(3-amino-3-carboxypropyl)histidine synthase subunit 1 (DPH1).